Consider the following 454-residue polypeptide: MSVADFYGSNVEVLLNNDSKARGVITNFDSSNSILQLRLANDSTKSIVTKDIKDLRILPKNEIMPKNGTKSPSTNSTKLKSAETYSSKNKWSMDCDEEFDFAANLEKFDKKQVFAEFREKDKKDPAKLLVSHNKSPNRNYHHKQNVLGPSVKDEFVDLPSAGSQINGIDAVLSSSSNGHVTPGSKKGSRETLKKKPFVDENIPAELHTTTGDILKPITPEQLSQGIALAIAKTSTDIVVENAAQLLSQFVFSVLGGHKRLSSRNHNSQPLVCILVGSHDHASAAVAAGRRLCAIGIKVVLRLLTPFNVDNRQLLMFQAAGGYIPTENFDQFLNKLTSPIELVVDVLTGFHPSIDKNSHALIQWANDLNVLILSVDIPSGYTVQKKNTAILPKWTLALGAVTTTLAQAALVKQAAGVSVFVGNLGTGSQTWAELGILESQVTGQYLAQISCTSTN.

The region spanning 1-61 (MSVADFYGSN…IKDLRILPKN (61 aa)) is the Sm domain. The 37-residue stretch at 87 to 123 (SKNKWSMDCDEEFDFAANLEKFDKKQVFAEFREKDKK) folds into the DFDF domain. The tract at residues 173-192 (SSSSNGHVTPGSKKGSRETL) is disordered. The YjeF N-terminal domain maps to 222 to 431 (LSQGIALAIA…NLGTGSQTWA (210 aa)).

It belongs to the EDC3 family. In terms of assembly, homodimer. Interacts with dcp2.

The protein localises to the cytoplasm. The protein resides in the P-body. In terms of biological role, stimulates decapping of both stable and unstable mRNA during mRNA decay. Stimulates decapping presumably by preventing the DCP1-DCP2 decapping complex from adopting an inactive conformation. Together with pdc1, acts as a scaffolding protein sufficient for the phase transition of the components of the 5' to 3' mRNA degradation machinery to form P-bodies. Intermolecular interactions between the edc3 Sm domain and at least 10 helical leucine-rich motifs in dcp2 and pdc1 build the core of the interaction network of this spontaneous clustering process. In Schizosaccharomyces pombe (strain 972 / ATCC 24843) (Fission yeast), this protein is Enhancer of mRNA-decapping protein 3 (edc3).